The sequence spans 698 residues: Elongation factor G (698 aa).

The tr-type G domain occupies 8-290 (ERYRNIGISA…AVIELLPSPT (283 aa)). Residues 17-24 (AHIDAGKT), 88-92 (DTPGH), and 142-145 (NKMD) each bind GTP.

Belongs to the TRAFAC class translation factor GTPase superfamily. Classic translation factor GTPase family. EF-G/EF-2 subfamily.

The protein localises to the cytoplasm. Its function is as follows. Catalyzes the GTP-dependent ribosomal translocation step during translation elongation. During this step, the ribosome changes from the pre-translocational (PRE) to the post-translocational (POST) state as the newly formed A-site-bound peptidyl-tRNA and P-site-bound deacylated tRNA move to the P and E sites, respectively. Catalyzes the coordinated movement of the two tRNA molecules, the mRNA and conformational changes in the ribosome. The polypeptide is Elongation factor G (Chromobacterium violaceum (strain ATCC 12472 / DSM 30191 / JCM 1249 / CCUG 213 / NBRC 12614 / NCIMB 9131 / NCTC 9757 / MK)).